Reading from the N-terminus, the 142-residue chain is Large ribosomal subunit protein uL22c (142 aa).

The protein belongs to the universal ribosomal protein uL22 family. Part of the 50S ribosomal subunit.

The protein resides in the plastid. The protein localises to the chloroplast. In terms of biological role, this protein binds specifically to 23S rRNA. Its function is as follows. The globular domain of the protein is located near the polypeptide exit tunnel on the outside of the subunit, while an extended beta-hairpin is found that lines the wall of the exit tunnel in the center of the 70S ribosome. The sequence is that of Large ribosomal subunit protein uL22c (rpl22) from Carica papaya (Papaya).